The sequence spans 856 residues: Leucine--tRNA ligase (856 aa).

The 'HIGH' region signature appears at 53–63 (PYPSGNLHMGH). The 'KMSKS' region motif lies at 622-626 (KMSKS). Lys-625 contacts ATP.

It belongs to the class-I aminoacyl-tRNA synthetase family.

It localises to the cytoplasm. It carries out the reaction tRNA(Leu) + L-leucine + ATP = L-leucyl-tRNA(Leu) + AMP + diphosphate. The chain is Leucine--tRNA ligase from Prochlorococcus marinus (strain AS9601).